Reading from the N-terminus, the 142-residue chain is Small ribosomal subunit protein uS12 (142 aa).

The protein belongs to the universal ribosomal protein uS12 family. As to quaternary structure, part of the 30S ribosomal subunit.

Its function is as follows. With S4 and S5 plays an important role in translational accuracy. Located at the interface of the 30S and 50S subunits. The polypeptide is Small ribosomal subunit protein uS12 (Thermoplasma volcanium (strain ATCC 51530 / DSM 4299 / JCM 9571 / NBRC 15438 / GSS1)).